A 436-amino-acid chain; its full sequence is Adenylosuccinate synthetase (436 aa).

Residues 12-18 (GDEGKGK) and 40-42 (GHT) contribute to the GTP site. Residue Asp13 is the Proton acceptor of the active site. Mg(2+)-binding residues include Asp13 and Gly40. IMP-binding positions include 13-16 (DEGK), 38-41 (NAGH), Thr128, Arg142, Gln223, Thr238, and Arg302. His41 functions as the Proton donor in the catalytic mechanism. 298–304 (TTTGRRR) contributes to the substrate binding site. GTP is bound by residues Arg304, 330–332 (KLD), and 412–414 (SLG).

The protein belongs to the adenylosuccinate synthetase family. In terms of assembly, homodimer. The cofactor is Mg(2+).

It is found in the cytoplasm. It carries out the reaction IMP + L-aspartate + GTP = N(6)-(1,2-dicarboxyethyl)-AMP + GDP + phosphate + 2 H(+). Its pathway is purine metabolism; AMP biosynthesis via de novo pathway; AMP from IMP: step 1/2. Functionally, plays an important role in the de novo pathway of purine nucleotide biosynthesis. Catalyzes the first committed step in the biosynthesis of AMP from IMP. This chain is Adenylosuccinate synthetase, found in Prochlorococcus marinus subsp. pastoris (strain CCMP1986 / NIES-2087 / MED4).